A 537-amino-acid chain; its full sequence is MNRTQLLTLIATGLGLFMIFLDALIVNVALPDIQRSFAVGEDGLQWVVASYSLGMAVFIMSAATLADLYGRRRWYLIGVSLFTLGSIACGLAPSIAVLTTARGAQGLGAAAVSVTSLALVSAAFPEAKEKARAIGIWTAIASIGTTTGPTLGGLLVDQWGWRSIFYVNLPMGALVLFLTLCYVEESCNERARRFDLSGQLLFIVAVGALVYAVIEGPQIGWTSVQTIVMLWTAAVGCALFVWLERRSSNPMMDLTLFRDTSYALAIATICTVFFAVYGMLLLTTQFLQNVRGYTPSVTGLMILPFSAAVAIVSPLVGHLVGRIGARVPILAGLCMLMLGLLMLIFSEHRSSALVLVGLGLCGSGVALCLTPITTVAMTAVPAERAGMASGIMSAQRAIGSTIGFAVLGSVLAAWLSATLEPHLERAVPDPVQRHVLAEIIIDSANPRAHVGGIVPRRHIEHRDPVAIAEEDFIEGIRVALLVATATLAVVFLAGWRWFPRDVHTAGSDLSERLPTAMTVECAVSHMPGATWCRLWPA.

Transmembrane regions (helical) follow at residues 6-26 (LLTL…ALIV), 46-66 (WVVA…ATLA), 77-97 (IGVS…SIAV), 104-124 (AQGL…SAAF), 136-156 (IWTA…GLLV), 163-183 (SIFY…LCYV), 200-220 (LLFI…PQIG), 223-243 (SVQT…FVWL), 262-282 (YALA…MLLL), 300-320 (LMIL…GHLV), 327-347 (VPIL…IFSE), 352-372 (ALVL…LTPI), 397-417 (AIGS…WLSA), and 478-498 (VALL…WRWF).

Belongs to the major facilitator superfamily. EmrB family.

Its subcellular location is the cell membrane. In Mycobacterium tuberculosis (strain CDC 1551 / Oshkosh), this protein is Multidrug resistance protein Stp (stp).